The primary structure comprises 208 residues: MGKKRSASSSRWLNEHFKDPFVQKAHKQKLRSRAYFKLDEIQQSDRLFKPGMTVVDLGAAPGGWSQYVVTQIGDKGRIIACDILDMDPIVGVDFLQGDFRDENVLAALLDRVGEDQVDVVMSDMAPNFSGMPSVDIPRAMYLVELALDMCKQVLAKKGSFVVKVFQGEGFDEYLREIRSLFTTVKVRKPEASRDRSREVYIVATGYRG.

Residues Gly-62, Trp-64, Asp-82, Asp-98, and Asp-123 each coordinate S-adenosyl-L-methionine. Lys-163 acts as the Proton acceptor in catalysis.

This sequence belongs to the class I-like SAM-binding methyltransferase superfamily. RNA methyltransferase RlmE family.

The protein resides in the cytoplasm. It carries out the reaction uridine(2552) in 23S rRNA + S-adenosyl-L-methionine = 2'-O-methyluridine(2552) in 23S rRNA + S-adenosyl-L-homocysteine + H(+). In terms of biological role, specifically methylates the uridine in position 2552 of 23S rRNA at the 2'-O position of the ribose in the fully assembled 50S ribosomal subunit. This chain is Ribosomal RNA large subunit methyltransferase E, found in Mannheimia succiniciproducens (strain KCTC 0769BP / MBEL55E).